We begin with the raw amino-acid sequence, 409 residues long: Peptidase T (409 aa).

Residue H78 coordinates Zn(2+). Residue D80 is part of the active site. D140 contributes to the Zn(2+) binding site. Catalysis depends on E173, which acts as the Proton acceptor. Zn(2+)-binding residues include E174, D196, and H379.

It belongs to the peptidase M20B family. Zn(2+) is required as a cofactor.

The protein localises to the cytoplasm. The enzyme catalyses Release of the N-terminal residue from a tripeptide.. Cleaves the N-terminal amino acid of tripeptides. This is Peptidase T from Escherichia coli O139:H28 (strain E24377A / ETEC).